The chain runs to 104 residues: Large ribosomal subunit protein uL24 (104 aa).

It belongs to the universal ribosomal protein uL24 family. As to quaternary structure, part of the 50S ribosomal subunit.

Its function is as follows. One of two assembly initiator proteins, it binds directly to the 5'-end of the 23S rRNA, where it nucleates assembly of the 50S subunit. One of the proteins that surrounds the polypeptide exit tunnel on the outside of the subunit. This chain is Large ribosomal subunit protein uL24, found in Brevibacillus brevis (strain 47 / JCM 6285 / NBRC 100599).